The sequence spans 278 residues: MSGMSRSLFGLGLRKPHYGDFLDGDAPVAVDFVEVISENFMVPGGRPRDVLRRVRERHPVALHGVSMSVGSADGIDRDYLARLRLLADEVDPLFVSDHLCWTRIEGFNAHDLLPLPYTEEALDVVCANIAIAQDVLGRAMLIENPSSYVAFDAPMTEWEFLDAMCARTGCGLLLDVNNIYVSASNHGFDAQAYLAGIPADRVAQIHLAGHSQGRTLLIDTHDRPVPPPVWALYEAAIAKLGPVATMIERDDDIPPLAELIDELQVARDMANAHMRRAA.

The protein belongs to the UPF0276 family.

In Rhizorhabdus wittichii (strain DSM 6014 / CCUG 31198 / JCM 15750 / NBRC 105917 / EY 4224 / RW1) (Sphingomonas wittichii), this protein is UPF0276 protein Swit_4400.